The following is a 588-amino-acid chain: Sentrin-specific protease 2 (588 aa).

The Nuclear localization signal motif lies at 28 to 31 (KRRR). At serine 32 the chain carries Phosphoserine. Residues 47–52 (PAKRPR) carry the Nuclear localization signal motif. Positions 72 to 381 (GFPFQLTTKP…EKEISNALGH (310 aa)) are axin-binding. Residues 157-184 (EGYNRRPSGRRHSKSNPESSLPWKPQEQ) are disordered. The Nuclear export signal motif lies at 316–331 (LEPDLSEEVSARLRLG). Residues serine 332 and serine 343 each carry the phosphoserine modification. Residues 394-558 (LRITRGDIQT…MFTCKYADYI (165 aa)) are protease. Active-site residues include histidine 477 and aspartate 494. Residue cysteine 547 is the Nucleophile of the active site.

The protein belongs to the peptidase C48 family. As to quaternary structure, binds to SUMO2 and SUMO3. Interacts with the C-terminal domain of NUP153 via its N-terminus. Interacts with MTA1. Binds to AXIN1. In terms of processing, polyubiquitinated; which leads to proteasomal degradation. Ubiquitous. Highly expressed in brain, lung and testis.

Its subcellular location is the nucleus. The protein resides in the nuclear pore complex. The protein localises to the nucleus membrane. It localises to the cytoplasm. Protease that catalyzes two essential functions in the SUMO pathway. The first is the hydrolysis of an alpha-linked peptide bond at the C-terminal end of the small ubiquitin-like modifier (SUMO) propeptides, SUMO1, SUMO2 and SUMO3 leading to the mature form of the proteins. The second is the deconjugation of SUMO1, SUMO2 and SUMO3 from targeted proteins, by cleaving an epsilon-linked peptide bond between the C-terminal glycine of the mature SUMO and the lysine epsilon-amino group of the target protein. May down-regulate CTNNB1 levels and thereby modulate the Wnt pathway. Deconjugates SUMO2 from MTA1. Plays a dynamic role in adipogenesis by desumoylating and promoting the stabilization of CEBPB. Acts as a regulator of the cGAS-STING pathway by catalyzing desumoylation of CGAS and STING1 during the late phase of viral infection. The polypeptide is Sentrin-specific protease 2 (Senp2) (Rattus norvegicus (Rat)).